The sequence spans 372 residues: Phospho-N-acetylmuramoyl-pentapeptide-transferase (372 aa).

A run of 10 helical transmembrane segments spans residues 25 to 45, 73 to 93, 98 to 118, 134 to 154, 176 to 196, 211 to 231, 251 to 271, 275 to 295, 300 to 320, and 349 to 369; these read RSLL…PVMI, TMGG…WADL, VWIV…DDWI, FFWT…IAQN, SIPL…YLVI, GLAI…AYLA, LVVI…YNAH, IFMG…IAVM, IVFA…FLQI, and QVVT…LMTL.

This sequence belongs to the glycosyltransferase 4 family. MraY subfamily. The cofactor is Mg(2+).

The protein localises to the cell inner membrane. The enzyme catalyses UDP-N-acetyl-alpha-D-muramoyl-L-alanyl-gamma-D-glutamyl-meso-2,6-diaminopimeloyl-D-alanyl-D-alanine + di-trans,octa-cis-undecaprenyl phosphate = di-trans,octa-cis-undecaprenyl diphospho-N-acetyl-alpha-D-muramoyl-L-alanyl-D-glutamyl-meso-2,6-diaminopimeloyl-D-alanyl-D-alanine + UMP. It functions in the pathway cell wall biogenesis; peptidoglycan biosynthesis. In terms of biological role, catalyzes the initial step of the lipid cycle reactions in the biosynthesis of the cell wall peptidoglycan: transfers peptidoglycan precursor phospho-MurNAc-pentapeptide from UDP-MurNAc-pentapeptide onto the lipid carrier undecaprenyl phosphate, yielding undecaprenyl-pyrophosphoryl-MurNAc-pentapeptide, known as lipid I. This Acinetobacter baylyi (strain ATCC 33305 / BD413 / ADP1) protein is Phospho-N-acetylmuramoyl-pentapeptide-transferase.